A 559-amino-acid chain; its full sequence is Acetolactate synthase, catabolic (559 aa).

FAD-binding positions include Arg159, 263–284, and 304–323; these read FNNQ…IGYS and DVLP…LVGD. A Mg(2+)-binding site is contributed by Asp447.

Belongs to the TPP enzyme family. As to quaternary structure, homodimer.

It catalyses the reaction 2 pyruvate + H(+) = (2S)-2-acetolactate + CO2. Its pathway is polyol metabolism; (R,R)-butane-2,3-diol biosynthesis; (R,R)-butane-2,3-diol from pyruvate: step 1/3. The chain is Acetolactate synthase, catabolic (budB) from Raoultella terrigena (Klebsiella terrigena).